Consider the following 351-residue polypeptide: DNA-directed RNA polymerase subunit alpha (351 aa).

An alpha N-terminal domain (alpha-NTD) region spans residues 1–236 (MSVNTKNWQE…DQLTLFVHFE (236 aa)). Positions 256 to 351 (DDANQLNRYL…AKKLEQELLG (96 aa)) are alpha C-terminal domain (alpha-CTD).

It belongs to the RNA polymerase alpha chain family. In terms of assembly, homodimer. The RNAP catalytic core consists of 2 alpha, 1 beta, 1 beta' and 1 omega subunit. When a sigma factor is associated with the core the holoenzyme is formed, which can initiate transcription.

The catalysed reaction is RNA(n) + a ribonucleoside 5'-triphosphate = RNA(n+1) + diphosphate. In terms of biological role, DNA-dependent RNA polymerase catalyzes the transcription of DNA into RNA using the four ribonucleoside triphosphates as substrates. The protein is DNA-directed RNA polymerase subunit alpha of Erythrobacter litoralis (strain HTCC2594).